The primary structure comprises 431 residues: tRNA (adenine(37)-N6)-methyltransferase (431 aa).

The region spanning 30 to 168 (TEPIGYLESC…YIADYDSPQN (139 aa)) is the TsaA-like domain. Residues 47–49 (PRQ), 90–91 (HK), Arg-117, Leu-127, and 148–151 (IDGT) each bind S-adenosyl-L-methionine. Residues 196-242 (LSGRGKVQPRQSTKERPKCLEDRTSGENSQKSRDMSEIQHTLPEDRE) form a disordered region. The segment covering 207–242 (STKERPKCLEDRTSGENSQKSRDMSEIQHTLPEDRE) has biased composition (basic and acidic residues).

Belongs to the tRNA methyltransferase O family.

It catalyses the reaction N(6)-L-threonylcarbamoyladenosine(37) in tRNA + S-adenosyl-L-methionine = N(6)-methyl,N(6)-L-threonylcarbamoyladenosine(37) in tRNA + S-adenosyl-L-homocysteine + H(+). In terms of biological role, S-adenosyl-L-methionine-dependent methyltransferase responsible for the addition of the methyl group in the formation of N6-methyl-N6-threonylcarbamoyladenosine at position 37 (m(6)t(6)A37) of the tRNA anticodon loop of tRNA(Ser)(GCU). The methyl group of m(6)t(6)A37 may improve the efficiency of the tRNA decoding ability. May bind to tRNA. This chain is tRNA (adenine(37)-N6)-methyltransferase, found in Mus musculus (Mouse).